We begin with the raw amino-acid sequence, 251 residues long: Ly6/PLAUR domain-containing protein 5 (251 aa).

The N-terminal stretch at 1–25 (MAMGVPRVILLCLFGAALCLTGSQA) is a signal peptide. Asn-120 and Asn-174 each carry an N-linked (GlcNAc...) asparagine glycan. Residues 135-214 (CYACIGVHQD…GSCCEGYLCN (80 aa)) enclose the UPAR/Ly6 domain. Ala-225 carries GPI-anchor amidated alanine lipidation. Residues 226-251 (SATTPPRALQVLALLLPVLLLVGLSA) constitute a propeptide, removed in mature form.

Its subcellular location is the cell membrane. The sequence is that of Ly6/PLAUR domain-containing protein 5 (LYPD5) from Homo sapiens (Human).